Reading from the N-terminus, the 456-residue chain is Phosphomethylpyrimidine synthase (456 aa).

Substrate-binding positions include Asn-80, Met-109, Tyr-139, His-175, 195 to 197, 236 to 239, and Glu-275; these read SRG and DSLR. Zn(2+) is bound at residue His-279. Tyr-302 contributes to the substrate binding site. His-343 serves as a coordination point for Zn(2+). [4Fe-4S] cluster-binding residues include Cys-423, Cys-426, and Cys-431.

Belongs to the ThiC family. [4Fe-4S] cluster is required as a cofactor.

The catalysed reaction is 5-amino-1-(5-phospho-beta-D-ribosyl)imidazole + S-adenosyl-L-methionine = 4-amino-2-methyl-5-(phosphooxymethyl)pyrimidine + CO + 5'-deoxyadenosine + formate + L-methionine + 3 H(+). The protein operates within cofactor biosynthesis; thiamine diphosphate biosynthesis. In terms of biological role, catalyzes the synthesis of the hydroxymethylpyrimidine phosphate (HMP-P) moiety of thiamine from aminoimidazole ribotide (AIR) in a radical S-adenosyl-L-methionine (SAM)-dependent reaction. The protein is Phosphomethylpyrimidine synthase of Prochlorococcus marinus subsp. pastoris (strain CCMP1986 / NIES-2087 / MED4).